The chain runs to 173 residues: Protein GrpE (173 aa).

Over residues 1-28 (MTEEEKTKSEAEEIEQNNKEEEQEKSVE) the composition is skewed to basic and acidic residues. The disordered stretch occupies residues 1–30 (MTEEEKTKSEAEEIEQNNKEEEQEKSVEEL).

The protein belongs to the GrpE family. Homodimer.

It localises to the cytoplasm. Functionally, participates actively in the response to hyperosmotic and heat shock by preventing the aggregation of stress-denatured proteins, in association with DnaK and GrpE. It is the nucleotide exchange factor for DnaK and may function as a thermosensor. Unfolded proteins bind initially to DnaJ; upon interaction with the DnaJ-bound protein, DnaK hydrolyzes its bound ATP, resulting in the formation of a stable complex. GrpE releases ADP from DnaK; ATP binding to DnaK triggers the release of the substrate protein, thus completing the reaction cycle. Several rounds of ATP-dependent interactions between DnaJ, DnaK and GrpE are required for fully efficient folding. This chain is Protein GrpE, found in Methanosphaera stadtmanae (strain ATCC 43021 / DSM 3091 / JCM 11832 / MCB-3).